Here is a 500-residue protein sequence, read N- to C-terminus: NAD(P)H-quinone oxidoreductase subunit 2 B, chloroplastic (500 aa).

Helical transmembrane passes span 14–34 (SILP…IDLT), 41–61 (WLYF…LFQL), 78–98 (FNGI…PLSM), 116–136 (LTAT…IIFI), 166–186 (LLMG…LYGL), 211–231 (ISIV…LVPF), 242–262 (APTS…LALA), 277–297 (WHLI…FIAI), 305–325 (MLAY…IAGD), 335–355 (YMLF…LFGL), 376–396 (ASFL…AGFF), 409–429 (GLYL…YYYL), and 467–487 (IIIC…VIAI).

It belongs to the complex I subunit 2 family. NDH is composed of at least 16 different subunits, 5 of which are encoded in the nucleus.

The protein localises to the plastid. It is found in the chloroplast thylakoid membrane. The enzyme catalyses a plastoquinone + NADH + (n+1) H(+)(in) = a plastoquinol + NAD(+) + n H(+)(out). It carries out the reaction a plastoquinone + NADPH + (n+1) H(+)(in) = a plastoquinol + NADP(+) + n H(+)(out). Functionally, NDH shuttles electrons from NAD(P)H:plastoquinone, via FMN and iron-sulfur (Fe-S) centers, to quinones in the photosynthetic chain and possibly in a chloroplast respiratory chain. The immediate electron acceptor for the enzyme in this species is believed to be plastoquinone. Couples the redox reaction to proton translocation, and thus conserves the redox energy in a proton gradient. The polypeptide is NAD(P)H-quinone oxidoreductase subunit 2 B, chloroplastic (Anthoceros angustus (Hornwort)).